The sequence spans 732 residues: Lanosterol synthase (732 aa).

N-acetylthreonine is present on T2. PFTB repeat units lie at residues 77 to 121 (ALNG…PLPA), 124 to 165 (REEI…RILG), 424 to 468 (PDNP…LLLQ), 483 to 528 (LCDA…MIDY), 560 to 600 (LTQG…ACMG), 612 to 653 (VSRA…HNTC), and 670 to 712 (QERG…NIFP). D455 acts as the Proton donor in catalysis.

This sequence belongs to the terpene cyclase/mutase family. In terms of assembly, monomer. As to expression, widely expressed. Expressed in the hair bulb, the outer root sheath and hair matrix of the hair follicle epithelium. Also detected in dermal papilla, epidermis, sweat glands, sebaceous glands, and blood vessels.

The protein resides in the endoplasmic reticulum membrane. The catalysed reaction is (S)-2,3-epoxysqualene = lanosterol. It participates in terpene metabolism; lanosterol biosynthesis; lanosterol from farnesyl diphosphate: step 3/3. In terms of biological role, key enzyme in the cholesterol biosynthesis pathway. Catalyzes the cyclization of (S)-2,3 oxidosqualene to lanosterol, a reaction that forms the sterol nucleus. Through the production of lanosterol may regulate lens protein aggregation and increase transparency. The chain is Lanosterol synthase (LSS) from Homo sapiens (Human).